A 167-amino-acid polypeptide reads, in one-letter code: Endothelin-3 (167 aa).

An N-terminal signal peptide occupies residues 1-19 (MELGLWLLLGLTVTSAAAA). A propeptide spanning residues 20-50 (LPAQPGNAGQERGPGRSGDQEEKRVPAHHRP) is cleaved from the precursor. The segment at 22–45 (AQPGNAGQERGPGRSGDQEEKRVP) is disordered. 2 disulfide bridges follow: Cys53–Cys67 and Cys55–Cys63. The propeptide occupies 74–167 (INTPEQTVPY…KSRTDKVHQP (94 aa)). Residues 85-112 (LSNHRGSLRGKRSSGPVPESSQSSPQTR) are disordered. Residues 97-109 (SSGPVPESSQSSP) are compositionally biased toward low complexity. Positions 115–135 (CACSGVDDKACAYFCAHVTSY) are endothelin-like. Basic and acidic residues predominate over residues 140–149 (EKAAAEEKQE). Residues 140 to 167 (EKAAAEEKQETGGPRQRLKSRTDKVHQP) are disordered.

It belongs to the endothelin/sarafotoxin family.

Its subcellular location is the secreted. Endothelins are endothelium-derived vasoconstrictor peptides. In Rattus norvegicus (Rat), this protein is Endothelin-3 (Edn3).